The following is a 110-amino-acid chain: UPF0251 protein PYRAB12660 (110 aa).

The protein belongs to the UPF0251 family.

This is UPF0251 protein PYRAB12660 from Pyrococcus abyssi (strain GE5 / Orsay).